The sequence spans 760 residues: Serine/threonine-protein kinase Haspin homolog ALK1 (760 aa).

2 positions are modified to phosphoserine: S76 and S79. Disordered stretches follow at residues 76–100 (SDAS…KKRW), 123–153 (SSFT…SSLD), 187–264 (DDIS…STVS), and 362–408 (KRNS…CSYS). Over residues 78–95 (ASLNVTTGNNTSRKTTSN) the composition is skewed to polar residues. A KEN box motif is present at residues 200–202 (KEN). Positions 209–220 (KKNSSIASTSSE) are enriched in polar residues. Residues 224–232 (RTPLKPLVN) carry the D box motif. A compositionally biased stretch (polar residues) spans 237-250 (PTSQPQQQQPLYNA). Residues 251 to 264 (SLSSRRSSISSTVS) are compositionally biased toward low complexity. Residues 362 to 386 (KRNSQSSLKHKSSHASLQKFKRNKG) are compositionally biased toward basic residues. Residues 398–408 (NSSNDDSCSYS) are compositionally biased toward low complexity. The Protein kinase domain occupies 468-760 (NCDIKRILNP…NTGDLLKLYK (293 aa)). Residues 474-482 (ILNPAKGDV) and K510 contribute to the ATP site.

This sequence belongs to the protein kinase superfamily. Ser/Thr protein kinase family. Haspin subfamily. In terms of processing, periodically phosphorylated during the cell cycle with a phosphorylation peak during mitosis and hyperphosphorylated after DNA damage.

The enzyme catalyses L-seryl-[protein] + ATP = O-phospho-L-seryl-[protein] + ADP + H(+). It carries out the reaction L-threonyl-[protein] + ATP = O-phospho-L-threonyl-[protein] + ADP + H(+). Serine/threonine haspin-like protein kinase involved in cell cycle regulation. This Saccharomyces cerevisiae (strain ATCC 204508 / S288c) (Baker's yeast) protein is Serine/threonine-protein kinase Haspin homolog ALK1 (ALK1).